The sequence spans 593 residues: Tyrosine-protein phosphatase non-receptor type 11 (593 aa).

T2 carries the N-acetylthreonine modification. SH2 domains lie at 6–102 (WFHP…KYPL) and 112–216 (WFHG…KQPL). Phosphotyrosine is present on residues Y62 and Y66. One can recognise a Tyrosine-protein phosphatase domain in the interval 247–521 (FWEEFETLQQ…RFIYMAVQHY (275 aa)). Substrate is bound by residues D425, 459-465 (CSAGIGR), and Q506. The active-site Phosphocysteine intermediate is C459. Y542 and Y580 each carry phosphotyrosine; by PDGFR.

This sequence belongs to the protein-tyrosine phosphatase family. Non-receptor class 2 subfamily. Interacts with CD84 and with phosphorylated SIT1 and MZPL1. Interacts with FCRL4, FCRL6 and ANKHD1. Interacts with GAREM1 (tyrosine phosphorylated); the interaction increases MAPK/ERK activity and does not affect the GRB2/SOS complex formation. Interacts with PTPNS1 and BCAR3. Interacts with phosphorylated LIME1. Interacts with SHB and INPP5D/SHIP1. Interacts with KIR2DL1; the interaction is enhanced by ARRB2. Interacts with GAB2. Interacts with TERT; the interaction retains TERT in the nucleus. Interacts with PECAM1 and FER. Interacts with EPHA2 (activated); participates in PTK2/FAK1 dephosphorylation in EPHA2 downstream signaling. Interacts with MILR1 (tyrosine phosphorylated). Interacts with FLT1 (tyrosine-phosphorylated), FLT3 (tyrosine-phosphorylated), FLT4 (tyrosine-phosphorylated), KIT and GRB2. Interacts with ROS1; mediates PTPN11 phosphorylation. Interacts with PDGFRA (tyrosine phosphorylated). Interacts with PDGFRB (tyrosine phosphorylated); this interaction increases the PTPN11 phosphatase activity. Interacts (via SH2 domain) with TEK/TIE2 (tyrosine phosphorylated). Interacts with CEACAM1 (via cytoplasmic domain); this interaction depends on the monomer/dimer equilibrium and is phosphorylation-dependent. Interacts with MPIG6B (via ITIM motif). Interacts with SIGLEC10. Interacts with Lilrb4a (when tyrosine phosphorylated). Interacts with SIGLEC10. Interacts with CLEC12B (via ITIM motif); this interaction triggers dephosphorylation and activation of PTPN11. Interacts (via SH2 domains) with NEDD9/CAS-L; the interaction is enhanced when NEDD9/CAS-L is tyrosine phosphorylated. Interacts with PIRB; when PIRB is phosphorylated by LYN at 'Tyr-794' and 'Tyr-824'. Post-translationally, phosphorylated on Tyr-542 and Tyr-580 upon receptor protein tyrosine kinase activation; which creates a binding site for GRB2 and other SH2-containing proteins. Phosphorylated upon activation of the receptor-type kinase FLT3. Phosphorylated by activated PDGFRB. Phosphorylated upon activation of the receptor-type kinase PDGFRA. In terms of tissue distribution, highly expressed in brain, heart and kidney.

It localises to the cytoplasm. It catalyses the reaction O-phospho-L-tyrosyl-[protein] + H2O = L-tyrosyl-[protein] + phosphate. Its function is as follows. Acts downstream of various receptor and cytoplasmic protein tyrosine kinases to participate in the signal transduction from the cell surface to the nucleus. Positively regulates MAPK signal transduction pathway. Dephosphorylates GAB1, ARHGAP35 and EGFR. Dephosphorylates ROCK2 at 'Tyr-722' resulting in stimulation of its RhoA binding activity. Dephosphorylates CDC73. Dephosphorylates SOX9 on tyrosine residues, leading to inactivate SOX9 and promote ossification. Dephosphorylates tyrosine-phosphorylated NEDD9/CAS-L. This is Tyrosine-protein phosphatase non-receptor type 11 (Ptpn11) from Mus musculus (Mouse).